We begin with the raw amino-acid sequence, 265 residues long: MFLIDSHCHLDLLNYNKIHTGIQDVLNKSKKKHVNVILTVSTSIENFCYLLKFIKGNRNVLLSCGIHPHYIPENKNEILKLKKYSNNEKVVAIGETGLDYYRNNDNKKLQQILFREHIKTSITLKKPLLIHTRNSINDTINILKEENSKQCIGVLHSFTEDMHSARILLNMGFYISFSGIVTFKNSKIVHETAKFVPIDRILIETDSPYLSPVPYRGIENQPAYLYDTMLYIAQLKNMSPECFAIQTTKNFLKLFNLPSYFTNMS.

Positions 7, 9, 95, 131, 156, and 206 each coordinate a divalent metal cation.

It belongs to the metallo-dependent hydrolases superfamily. TatD-type hydrolase family. A divalent metal cation serves as cofactor.

This is an uncharacterized protein from Buchnera aphidicola subsp. Baizongia pistaciae (strain Bp).